The sequence spans 138 residues: Putative pre-16S rRNA nuclease (138 aa).

This sequence belongs to the YqgF nuclease family.

The protein localises to the cytoplasm. Functionally, could be a nuclease involved in processing of the 5'-end of pre-16S rRNA. The sequence is that of Putative pre-16S rRNA nuclease from Porphyromonas gingivalis (strain ATCC BAA-308 / W83).